A 312-amino-acid polypeptide reads, in one-letter code: Putative endo-1,4-beta-xylanase (312 aa).

One can recognise a GH10 domain in the interval 1–301; that stretch reads MKQQYLLDYE…KPCFYSFLQA (301 aa). Glu-104 serves as the catalytic Proton donor. The Nucleophile role is filled by Glu-216.

This sequence belongs to the glycosyl hydrolase 10 (cellulase F) family.

It catalyses the reaction Endohydrolysis of (1-&gt;4)-beta-D-xylosidic linkages in xylans.. The protein operates within glycan degradation; xylan degradation. In terms of biological role, could be a xylanase. This chain is Putative endo-1,4-beta-xylanase, found in Caldicellulosiruptor saccharolyticus (Caldocellum saccharolyticum).